Here is a 213-residue protein sequence, read N- to C-terminus: Ras-related protein Rab-25 (213 aa).

GTP is bound by residues Ser-21, Gly-24, Lys-25, Thr-26, Asn-27, Ser-38, His-39, Thr-43, and Thr-44. Thr-26 provides a ligand contact to Mg(2+). 2 short sequence motifs (switch) span residues 35-49 (NEFS…GVEF) and 67-84 (DTAG…YYRG). Thr-44 and Asp-67 together coordinate Mg(2+). Positions 70, 125, 126, 128, 156, and 157 each coordinate GTP. 2 S-geranylgeranyl cysteine lipidation sites follow: Cys-209 and Cys-210. Cys-210 carries the post-translational modification Cysteine methyl ester. The propeptide at 211–213 (ISL) is removed in mature form.

This sequence belongs to the small GTPase superfamily. Rab family. In terms of assembly, interacts (GTP-bound form) with RAB11FIP1, RAB11FIP2, RAB11FIP3 and RAB11FIP4. Interacts (via the hypervariable C-terminal region) with ITGB1 (via the cytoplasmic region); the interaction is GTP-dependent. Interacts with ITGAV. Associates with the integrin alpha-V/beta-1 heterodimer. Interacts with VPS33B. Requires Mg(2+) as cofactor.

The protein localises to the cell membrane. It is found in the cell projection. The protein resides in the pseudopodium membrane. Its subcellular location is the cytoplasmic vesicle. It carries out the reaction GTP + H2O = GDP + phosphate + H(+). With respect to regulation, regulated by guanine nucleotide exchange factors (GEFs) which promote the exchange of bound GDP for free GTP. Regulated by GTPase activating proteins (GAPs) which increase the GTP hydrolysis activity. Inhibited by GDP dissociation inhibitors (GDIs) which prevent Rab-GDP dissociation. The small GTPases Rab are key regulators of intracellular membrane trafficking, from the formation of transport vesicles to their fusion with membranes. Rabs cycle between an inactive GDP-bound form and an active GTP-bound form that is able to recruit to membranes different set of downstream effectors directly responsible for vesicle formation, movement, tethering and fusion. RAB25 regulates epithelial cell differentiation, proliferation and survival, thereby playing key roles in tumorigenesis. Promotes invasive migration of cells in which it functions to localize and maintain integrin alpha-V/beta-1 at the tips of extending pseudopodia. Involved in the regulation of epithelial morphogenesis through the control of CLDN4 expression and localization at tight junctions. May selectively regulate the apical recycling pathway. Together with MYO5B regulates transcytosis. This Canis lupus familiaris (Dog) protein is Ras-related protein Rab-25 (RAB25).